The following is a 211-amino-acid chain: ATP phosphoribosyltransferase (211 aa).

Belongs to the ATP phosphoribosyltransferase family. Short subfamily. In terms of assembly, heteromultimer composed of HisG and HisZ subunits.

Its subcellular location is the cytoplasm. It catalyses the reaction 1-(5-phospho-beta-D-ribosyl)-ATP + diphosphate = 5-phospho-alpha-D-ribose 1-diphosphate + ATP. The protein operates within amino-acid biosynthesis; L-histidine biosynthesis; L-histidine from 5-phospho-alpha-D-ribose 1-diphosphate: step 1/9. Catalyzes the condensation of ATP and 5-phosphoribose 1-diphosphate to form N'-(5'-phosphoribosyl)-ATP (PR-ATP). Has a crucial role in the pathway because the rate of histidine biosynthesis seems to be controlled primarily by regulation of HisG enzymatic activity. In Pseudomonas putida (strain W619), this protein is ATP phosphoribosyltransferase.